Consider the following 131-residue polypeptide: Sirohydrochlorin cobaltochelatase (131 aa).

His12 functions as the Proton acceptor in the catalytic mechanism. 2 residues coordinate Co(2+): His12 and His78. The Ni(2+) site is built by His12 and His78. 73–78 (LASGVH) contributes to the substrate binding site.

This sequence belongs to the CbiX family. CbiXS subfamily. In terms of assembly, homotetramer; dimer of dimers.

It catalyses the reaction Co-sirohydrochlorin + 2 H(+) = sirohydrochlorin + Co(2+). The catalysed reaction is Ni-sirohydrochlorin + 2 H(+) = sirohydrochlorin + Ni(2+). It functions in the pathway cofactor biosynthesis; adenosylcobalamin biosynthesis; cob(II)yrinate a,c-diamide from sirohydrochlorin (anaerobic route): step 1/10. Catalyzes the insertion of Co(2+) into sirohydrochlorin as part of the anaerobic pathway to cobalamin biosynthesis. Involved in the biosynthesis of the unique nickel-containing tetrapyrrole coenzyme F430, the prosthetic group of methyl-coenzyme M reductase (MCR), which plays a key role in methanogenesis and anaerobic methane oxidation. Catalyzes the insertion of Ni(2+) into sirohydrochlorin to yield Ni-sirohydrochlorin. The chain is Sirohydrochlorin cobaltochelatase from Methanococcoides burtonii (strain DSM 6242 / NBRC 107633 / OCM 468 / ACE-M).